Reading from the N-terminus, the 199-residue chain is Chaperone protein TorD (199 aa).

It belongs to the TorD/DmsD family. TorD subfamily.

The protein localises to the cytoplasm. Involved in the biogenesis of TorA. Acts on TorA before the insertion of the molybdenum cofactor and, as a result, probably favors a conformation of the apoenzyme that is competent for acquiring the cofactor. The polypeptide is Chaperone protein TorD (Escherichia coli (strain K12 / MC4100 / BW2952)).